A 278-amino-acid chain; its full sequence is Pantothenate synthetase (278 aa).

Residue 27–34 (MGNLHEGH) participates in ATP binding. Histidine 34 (proton donor) is an active-site residue. Glutamine 58 contacts (R)-pantoate. Glutamine 58 contacts beta-alanine. 147–150 (GEKD) contributes to the ATP binding site. Glutamine 153 serves as a coordination point for (R)-pantoate. 184-187 (YSSR) is an ATP binding site.

This sequence belongs to the pantothenate synthetase family. Homodimer.

The protein localises to the cytoplasm. The catalysed reaction is (R)-pantoate + beta-alanine + ATP = (R)-pantothenate + AMP + diphosphate + H(+). It functions in the pathway cofactor biosynthesis; (R)-pantothenate biosynthesis; (R)-pantothenate from (R)-pantoate and beta-alanine: step 1/1. Catalyzes the condensation of pantoate with beta-alanine in an ATP-dependent reaction via a pantoyl-adenylate intermediate. In Acidithiobacillus ferrooxidans (strain ATCC 23270 / DSM 14882 / CIP 104768 / NCIMB 8455) (Ferrobacillus ferrooxidans (strain ATCC 23270)), this protein is Pantothenate synthetase.